Reading from the N-terminus, the 318-residue chain is UAP56-interacting factor (318 aa).

N-acetylmethionine is present on M1. Residues M1–E25 form a disordered region. The residue at position 14 (T14) is a Phosphothreonine. 2 positions are modified to phosphoserine: S16 and S23. The short motif at N26 to E44 is the UAP56-binding motif element. The residue at position 61 (S61) is a Phosphoserine. The segment at G79–G100 is disordered. The segment covering L85 to P98 has biased composition (basic residues). S118 is modified (phosphoserine). K140 is covalently cross-linked (Glycyl lysine isopeptide (Lys-Gly) (interchain with G-Cter in SUMO1)). K261 participates in a covalent cross-link: Glycyl lysine isopeptide (Lys-Gly) (interchain with G-Cter in SUMO2).

The protein belongs to the UIF family. In terms of assembly, interacts with CHTOP. Interacts with DDX39B/UAP56 and NXF1; interaction with DDX39B/UAP56 and NXF1 are mutually exclusive. Interacts with SSRP1; required for its recruitment to mRNAs. In terms of tissue distribution, expressed in a wide variety of cancer types.

The protein resides in the nucleus. The protein localises to the nucleoplasm. It is found in the nucleus speckle. Its function is as follows. Required for mRNA export from the nucleus to the cytoplasm. Acts as an adapter that uses the DDX39B/UAP56-NFX1 pathway to ensure efficient mRNA export and delivering to the nuclear pore. Associates with spliced and unspliced mRNAs simultaneously with ALYREF/THOC4. This chain is UAP56-interacting factor (FYTTD1), found in Homo sapiens (Human).